A 348-amino-acid polypeptide reads, in one-letter code: MAEQQKGLTYADAGVDIDAGNALVERIKPAAKRTARPGTVSGLGGFGALFDLKAAGYHDPVLVAATDGVGTKLRIAIDTGEVDTIGIDLVAMCVNDLVCQGAEPLFFLDYFATGKLEVAQAARIIEGIAEGCAASGCALIGGETAEMPGMYHKGDFDLAGFAVGAMERGADLPQGVAEGDVLLGLGSNGVHSNGYSFVRKVVELSGLGWDAPAPFGGDSLGRALLAPTRLYVKQALAAVRAGGVHALAHITGGGLTENLPRVLPEGLGARIDLSAWELPSVFRWLAETASMAEPELLKTFNCGIGMIVVVAADRADEIAALLAAEGETVTRIGEVIAGEGVSYDGRLL.

This sequence belongs to the AIR synthase family.

The protein resides in the cytoplasm. It carries out the reaction 2-formamido-N(1)-(5-O-phospho-beta-D-ribosyl)acetamidine + ATP = 5-amino-1-(5-phospho-beta-D-ribosyl)imidazole + ADP + phosphate + H(+). It participates in purine metabolism; IMP biosynthesis via de novo pathway; 5-amino-1-(5-phospho-D-ribosyl)imidazole from N(2)-formyl-N(1)-(5-phospho-D-ribosyl)glycinamide: step 2/2. This chain is Phosphoribosylformylglycinamidine cyclo-ligase, found in Cereibacter sphaeroides (strain KD131 / KCTC 12085) (Rhodobacter sphaeroides).